A 158-amino-acid chain; its full sequence is NADPH-dependent 7-cyano-7-deazaguanine reductase (158 aa).

Catalysis depends on cysteine 56, which acts as the Thioimide intermediate. Residue aspartate 63 is the Proton donor of the active site. Substrate is bound by residues 78–80 (LES) and 97–98 (HE).

The protein belongs to the GTP cyclohydrolase I family. QueF type 1 subfamily.

It localises to the cytoplasm. The enzyme catalyses 7-aminomethyl-7-carbaguanine + 2 NADP(+) = 7-cyano-7-deazaguanine + 2 NADPH + 3 H(+). It participates in tRNA modification; tRNA-queuosine biosynthesis. Its function is as follows. Catalyzes the NADPH-dependent reduction of 7-cyano-7-deazaguanine (preQ0) to 7-aminomethyl-7-deazaguanine (preQ1). This chain is NADPH-dependent 7-cyano-7-deazaguanine reductase, found in Nitrobacter winogradskyi (strain ATCC 25391 / DSM 10237 / CIP 104748 / NCIMB 11846 / Nb-255).